We begin with the raw amino-acid sequence, 559 residues long: MKSHLSDIEIAQRTELKPITEIARKLNINDEEIECFGCTKAKISLKIFERLKEKPDGQVILVTSINPTPAGEGKSTVTVGLSQALWQIGKKSIVAMREPSLGPTMGLKGGAAGGGYSQVLPMEDINLHFTGDMHAITAANNALAAFIDNHIHQGNELNIDIRKIVWKRALDLNDRALRETVVGLGGKANGFPREDGFDITVASEIMAVLCLARDLADLKKRLASMIVAYTVDGQPVTAGMLGVQGALALLLKDAIKPNLVQTVEGTPALVHGGPFANIAHGANSLIATKTAAKLADYVVTEAGFGADLGAEKFMHIKTRAGGFTPGAVVIVATVRALKMHGGTPLADLKQKDLEALKRGIANLAKHIETIDAFGLPYVVAVNRFVQDTEDELEAVLGWCRDNGHPAALCNVWEEGGKGGTDLAREVIHVMEQKDNRFSYLYELTDSIEDKLAKISRTVYGAEGVEFTEKAKKQLLELKKNGLDGLPVCVAKTQYSLSDDPGKIGRPQDFSITVRELKPSRGAGFIVALTGSILTMPGLPKHPAALKMDVDESGRAKGLF.

ATP is bound at residue 68-75 (TPAGEGKS).

It belongs to the formate--tetrahydrofolate ligase family.

The catalysed reaction is (6S)-5,6,7,8-tetrahydrofolate + formate + ATP = (6R)-10-formyltetrahydrofolate + ADP + phosphate. It functions in the pathway one-carbon metabolism; tetrahydrofolate interconversion. This is Formate--tetrahydrofolate ligase from Bacillus licheniformis (strain ATCC 14580 / DSM 13 / JCM 2505 / CCUG 7422 / NBRC 12200 / NCIMB 9375 / NCTC 10341 / NRRL NRS-1264 / Gibson 46).